We begin with the raw amino-acid sequence, 172 residues long: Shikimate kinase (172 aa).

Residue 11–16 (GAGKST) coordinates ATP. Mg(2+) is bound at residue Ser15. The substrate site is built by Asp33, Arg57, and Gly79. ATP is bound at residue Arg117. A substrate-binding site is contributed by Arg136. Residue Arg153 coordinates ATP.

This sequence belongs to the shikimate kinase family. Monomer. Requires Mg(2+) as cofactor.

The protein resides in the cytoplasm. It carries out the reaction shikimate + ATP = 3-phosphoshikimate + ADP + H(+). The protein operates within metabolic intermediate biosynthesis; chorismate biosynthesis; chorismate from D-erythrose 4-phosphate and phosphoenolpyruvate: step 5/7. Functionally, catalyzes the specific phosphorylation of the 3-hydroxyl group of shikimic acid using ATP as a cosubstrate. The sequence is that of Shikimate kinase from Pseudomonas fluorescens (strain Pf0-1).